The following is a 704-amino-acid chain: Matrix metalloproteinase-9 (704 aa).

The N-terminal stretch at 1-19 (MSPRQPLVLVFLVLGCCSA) is a signal peptide. Positions 20–106 (APRPHKPTVV…PRCGVPDLGK (87 aa)) are cleaved as a propeptide — activation peptide. The N-linked (GlcNAc...) asparagine glycan is linked to asparagine 38. Positions 97-104 (PRCGVPDL) match the Cysteine switch motif. Cysteine 99 contacts Zn(2+). Asparagine 127 carries N-linked (GlcNAc...) asparagine glycosylation. Ca(2+)-binding residues include aspartate 131 and aspartate 165. Residues histidine 175 and aspartate 177 each contribute to the Zn(2+) site. Residues aspartate 182, glycine 183, asparagine 185, and leucine 187 each coordinate Ca(2+). Histidine 190 is a Zn(2+) binding site. Glycine 197, glutamine 199, and aspartate 201 together coordinate Ca(2+). Residue histidine 203 participates in Zn(2+) binding. Residues aspartate 205, aspartate 206, and glutamate 208 each coordinate Ca(2+). 3 Fibronectin type-II domains span residues 225-273 (ADGA…FCPS), 283-331 (GDGK…FCPT), and 342-390 (SAGE…FCPD). Cystine bridges form between cysteine 230/cysteine 256, cysteine 244/cysteine 271, cysteine 288/cysteine 314, cysteine 302/cysteine 329, cysteine 347/cysteine 373, and cysteine 361/cysteine 388. Histidine 401 contacts Zn(2+). Glutamate 402 is a catalytic residue. The Zn(2+) site is built by histidine 405 and histidine 411. The tract at residues 434–507 (DDVRGIQHLY…PSEAPTVPVD (74 aa)) is disordered. 2 stretches are compositionally biased toward pro residues: residues 450-461 (EPQPPTAPPTAP) and 483-496 (TGPPAAGPTGPPTA). Cysteine 513 and cysteine 701 are oxidised to a cystine. Hemopexin repeat units follow at residues 515–560 (VNIF…WPAL), 561–605 (PRKL…GLGP), 607–654 (VTQV…YPGV), and 655–701 (PLNT…ILQC).

Belongs to the peptidase M10A family. In terms of assembly, exists as monomer or homodimer; disulfide-linked. Also exists as heterodimer with LCN2. Macrophages and transformed cell lines produce only the monomeric form. Interacts with ECM1. It depends on Zn(2+) as a cofactor. The cofactor is Ca(2+). In terms of processing, N- and O-glycosylated.

The protein resides in the secreted. It is found in the extracellular space. It localises to the extracellular matrix. The catalysed reaction is Cleavage of gelatin types I and V and collagen types IV and V.. In terms of biological role, matrix metalloproteinase that plays an essential role in local proteolysis of the extracellular matrix and in leukocyte migration. Could play a role in bone osteoclastic resorption. Cleaves KiSS1 at a Gly-|-Leu bond. Cleaves NINJ1 to generate the Secreted ninjurin-1 form. Cleaves type IV and type V collagen into large C-terminal three quarter fragments and shorter N-terminal one quarter fragments. Degrades fibronectin but not laminin or Pz-peptide. The protein is Matrix metalloproteinase-9 (MMP9) of Canis lupus familiaris (Dog).